A 116-amino-acid polypeptide reads, in one-letter code: MTNKIILALEAEQMTKEIPAFAPGDTIVVQVKVKEGDRSRLQAFEGVVIAKRNRGVNSAFTVRKISNGVGVERTFQTYSPQIDSMAVKRRGDVRKAKLYYLRDLSGKAARIKEKLA.

The protein belongs to the bacterial ribosomal protein bL19 family.

In terms of biological role, this protein is located at the 30S-50S ribosomal subunit interface and may play a role in the structure and function of the aminoacyl-tRNA binding site. In Pseudomonas fluorescens (strain ATCC BAA-477 / NRRL B-23932 / Pf-5), this protein is Large ribosomal subunit protein bL19.